A 156-amino-acid chain; its full sequence is ATP synthase subunit b (156 aa).

Residues 11 to 31 (AIAFFIFVVFCMKYVWPPLMA) form a helical membrane-spanning segment.

It belongs to the ATPase B chain family. As to quaternary structure, F-type ATPases have 2 components, F(1) - the catalytic core - and F(0) - the membrane proton channel. F(1) has five subunits: alpha(3), beta(3), gamma(1), delta(1), epsilon(1). F(0) has three main subunits: a(1), b(2) and c(10-14). The alpha and beta chains form an alternating ring which encloses part of the gamma chain. F(1) is attached to F(0) by a central stalk formed by the gamma and epsilon chains, while a peripheral stalk is formed by the delta and b chains.

The protein localises to the cell inner membrane. Its function is as follows. F(1)F(0) ATP synthase produces ATP from ADP in the presence of a proton or sodium gradient. F-type ATPases consist of two structural domains, F(1) containing the extramembraneous catalytic core and F(0) containing the membrane proton channel, linked together by a central stalk and a peripheral stalk. During catalysis, ATP synthesis in the catalytic domain of F(1) is coupled via a rotary mechanism of the central stalk subunits to proton translocation. Functionally, component of the F(0) channel, it forms part of the peripheral stalk, linking F(1) to F(0). The sequence is that of ATP synthase subunit b from Aeromonas hydrophila subsp. hydrophila (strain ATCC 7966 / DSM 30187 / BCRC 13018 / CCUG 14551 / JCM 1027 / KCTC 2358 / NCIMB 9240 / NCTC 8049).